The chain runs to 407 residues: Methylenetetrahydrofolate--tRNA-(uracil-5-)-methyltransferase TrmFO (407 aa).

9 to 14 (GAGLAG) serves as a coordination point for FAD.

It belongs to the MnmG family. TrmFO subfamily. Requires FAD as cofactor.

It localises to the cytoplasm. The enzyme catalyses uridine(54) in tRNA + (6R)-5,10-methylene-5,6,7,8-tetrahydrofolate + NADH + H(+) = 5-methyluridine(54) in tRNA + (6S)-5,6,7,8-tetrahydrofolate + NAD(+). The catalysed reaction is uridine(54) in tRNA + (6R)-5,10-methylene-5,6,7,8-tetrahydrofolate + NADPH + H(+) = 5-methyluridine(54) in tRNA + (6S)-5,6,7,8-tetrahydrofolate + NADP(+). Catalyzes the folate-dependent formation of 5-methyl-uridine at position 54 (M-5-U54) in all tRNAs. This Lactobacillus helveticus (strain DPC 4571) protein is Methylenetetrahydrofolate--tRNA-(uracil-5-)-methyltransferase TrmFO.